The chain runs to 301 residues: Fluoroquinolones export ATP-binding protein Rv2688c (301 aa).

Residues 18–246 (IRVRGLTFRY…RSRRRVRVEY (229 aa)) form the ABC transporter domain. 52-59 (GPSGAGKS) contributes to the ATP binding site.

It belongs to the ABC transporter superfamily. In terms of assembly, the complex is composed of 2 ATP-binding proteins (Rv2688c) and 2 transmembrane proteins (Rv2686c and Rv2687c).

The protein localises to the cell membrane. Its activity is regulated as follows. Inhibited by reserpine and verapamil. Its function is as follows. Part of the ABC transporter complex Rv2686c/Rv2687c/Rv2688c involved in fluoroquinolones export. Confers resistance to ciprofloxacin and, to a lesser extent, norfloxacin, moxifloxacin and sparfloxacin. Probably responsible for energy coupling to the transport system. This chain is Fluoroquinolones export ATP-binding protein Rv2688c, found in Mycobacterium tuberculosis (strain ATCC 25618 / H37Rv).